A 114-amino-acid chain; its full sequence is Adapter SH3BGRL (114 aa).

The interval 13-50 (STAIKKKQQDVLGFLEANKIGFEEKDIAANEENRKWMR) is required for interaction with HER2. The segment at 54–71 (PENSRPATGYPLPPQIFN) is required for interaction with PFN1, HER2, and ATG12. The short motif at 61-67 (TGYPLPP) is the SH3-binding element.

Belongs to the SH3BGR family. Monomer. Interacts with PFN1/Profilin-1. Interacts with ERBB2. Interacts with ATG12. Interacts with BECN1. Interacts with translating ribosomes. In terms of tissue distribution, ubiquitous.

The protein localises to the cytoplasm. It localises to the cytosol. The protein resides in the cell membrane. Its function is as follows. Appears to function as an adapter protein that bridges proteins together or proteins with mRNAs. May function as a ubiquitin ligase-substrate adapter. Additionally, associates with translating cytoplasmic ribosomes and may promote the expression of specific mRNAs. This chain is Adapter SH3BGRL, found in Homo sapiens (Human).